We begin with the raw amino-acid sequence, 332 residues long: Glycerol-3-phosphate dehydrogenase [NAD(P)+] (332 aa).

NADPH is bound by residues tryptophan 11, arginine 30, and lysine 108. The sn-glycerol 3-phosphate site is built by lysine 108, glycine 137, and serine 139. An NADPH-binding site is contributed by alanine 141. 5 residues coordinate sn-glycerol 3-phosphate: lysine 192, aspartate 245, serine 255, arginine 256, and asparagine 257. The Proton acceptor role is filled by lysine 192. Arginine 256 serves as a coordination point for NADPH. NADPH contacts are provided by valine 280 and glutamate 282.

It belongs to the NAD-dependent glycerol-3-phosphate dehydrogenase family.

It localises to the cytoplasm. The catalysed reaction is sn-glycerol 3-phosphate + NAD(+) = dihydroxyacetone phosphate + NADH + H(+). It catalyses the reaction sn-glycerol 3-phosphate + NADP(+) = dihydroxyacetone phosphate + NADPH + H(+). The protein operates within membrane lipid metabolism; glycerophospholipid metabolism. Functionally, catalyzes the reduction of the glycolytic intermediate dihydroxyacetone phosphate (DHAP) to sn-glycerol 3-phosphate (G3P), the key precursor for phospholipid synthesis. The protein is Glycerol-3-phosphate dehydrogenase [NAD(P)+] of Burkholderia thailandensis (strain ATCC 700388 / DSM 13276 / CCUG 48851 / CIP 106301 / E264).